Consider the following 143-residue polypeptide: Protein RJ1 (143 aa).

The N-terminal stretch at 1–26 (MARVMTRGMARVSTLATVRVSTLARA) is a signal peptide.

The protein is Protein RJ1 (RJ1) of Human herpesvirus 6A (strain Uganda-1102) (HHV-6 variant A).